The chain runs to 1342 residues: DNA-directed RNA polymerase subunit beta (1342 aa).

Belongs to the RNA polymerase beta chain family. As to quaternary structure, the RNAP catalytic core consists of 2 alpha, 1 beta, 1 beta' and 1 omega subunit. When a sigma factor is associated with the core the holoenzyme is formed, which can initiate transcription.

It carries out the reaction RNA(n) + a ribonucleoside 5'-triphosphate = RNA(n+1) + diphosphate. Its function is as follows. DNA-dependent RNA polymerase catalyzes the transcription of DNA into RNA using the four ribonucleoside triphosphates as substrates. The polypeptide is DNA-directed RNA polymerase subunit beta (Wigglesworthia glossinidia brevipalpis).